The chain runs to 380 residues: Cytochrome b (380 aa).

The next 4 helical transmembrane spans lie at 34-54 (FGSLLTICLLTQILTGLLLAM), 78-99 (WLIRNLHANGASFFFICIYLHI), 114-134 (WNTGVILLLTLMATAFVGYVL), and 179-199 (FFALHFLLPFMIVGLSMIHLT). Positions 84 and 98 each coordinate heme b. Residues histidine 183 and histidine 197 each coordinate heme b. An a ubiquinone-binding site is contributed by histidine 202. 4 helical membrane passes run 227–247 (LKDILGFILMLLPLTTLALFS), 289–309 (LGGVLALAASVLILFLAPFLH), 321–341 (ISQLLFWILVANLLILTWVGS), and 348–368 (FIIIGQLASITYFTILLILFP).

This sequence belongs to the cytochrome b family. The cytochrome bc1 complex contains 11 subunits: 3 respiratory subunits (MT-CYB, CYC1 and UQCRFS1), 2 core proteins (UQCRC1 and UQCRC2) and 6 low-molecular weight proteins (UQCRH/QCR6, UQCRB/QCR7, UQCRQ/QCR8, UQCR10/QCR9, UQCR11/QCR10 and a cleavage product of UQCRFS1). This cytochrome bc1 complex then forms a dimer. Heme b serves as cofactor.

It localises to the mitochondrion inner membrane. In terms of biological role, component of the ubiquinol-cytochrome c reductase complex (complex III or cytochrome b-c1 complex) that is part of the mitochondrial respiratory chain. The b-c1 complex mediates electron transfer from ubiquinol to cytochrome c. Contributes to the generation of a proton gradient across the mitochondrial membrane that is then used for ATP synthesis. The polypeptide is Cytochrome b (MT-CYB) (Pelecanoides garnotii (Peruvian diving petrel)).